Here is a 208-residue protein sequence, read N- to C-terminus: Calcyphosin-like protein (208 aa).

EF-hand domains lie at 39 to 74, 75 to 110, 111 to 146, and 154 to 191; these read AGIK…YAVV, MEKE…PMSR, ARKE…KHHP, and SEEQ…VSAS. Residues D52, D54, N56, T58, E63, D88, D90, N92, T94, and E99 each contribute to the Ca(2+) site.

The protein resides in the cytoplasm. The polypeptide is Calcyphosin-like protein (CAPSL) (Homo sapiens (Human)).